Here is a 338-residue protein sequence, read N- to C-terminus: tRNA N6-adenosine threonylcarbamoyltransferase (338 aa).

Fe cation-binding residues include His-114 and His-118. Substrate is bound by residues 136–140 (LVSGG), Asp-169, Gly-182, Asp-186, and Asn-275. Position 301 (Asp-301) interacts with Fe cation.

This sequence belongs to the KAE1 / TsaD family. Requires Fe(2+) as cofactor.

The protein localises to the cytoplasm. The enzyme catalyses L-threonylcarbamoyladenylate + adenosine(37) in tRNA = N(6)-L-threonylcarbamoyladenosine(37) in tRNA + AMP + H(+). Functionally, required for the formation of a threonylcarbamoyl group on adenosine at position 37 (t(6)A37) in tRNAs that read codons beginning with adenine. Is involved in the transfer of the threonylcarbamoyl moiety of threonylcarbamoyl-AMP (TC-AMP) to the N6 group of A37, together with TsaE and TsaB. TsaD likely plays a direct catalytic role in this reaction. This is tRNA N6-adenosine threonylcarbamoyltransferase from Streptococcus equi subsp. zooepidemicus (strain MGCS10565).